The primary structure comprises 1039 residues: Multidrug resistance protein MdtB (1039 aa).

12 helical membrane-spanning segments follow: residues 16–36, 342–362, 373–393, 396–416, 440–460, 472–492, 537–557, 863–883, 888–908, 911–931, 968–988, and 1002–1022; these read FILR…AGII, DVQF…YVFL, VAVP…GFSI, LTLM…IVVI, IGFT…PLLF, FAVT…TLTP, WLTL…YLLI, LGGT…VLGV, FIHP…ALLA, MAGS…IGIV, ILMT…STGV, and GGLV…YLLF.

The protein belongs to the resistance-nodulation-cell division (RND) (TC 2.A.6) family. MdtB subfamily. In terms of assembly, part of a tripartite efflux system composed of MdtA, MdtB and MdtC. MdtB forms a heteromultimer with MdtC.

It localises to the cell inner membrane. This Serratia proteamaculans (strain 568) protein is Multidrug resistance protein MdtB.